We begin with the raw amino-acid sequence, 422 residues long: Ferrochelatase, mitochondrial (422 aa).

A mitochondrion-targeting transit peptide spans 1–53; the sequence is MLSASANMAAALRAAGALLREPLVHGSSRACQPWRCQSGAAVAATTEKVHHAK. N6-acetyllysine is present on Lys56. Arg114, Tyr122, and Ser129 together coordinate protoporphyrin IX. Lys137 carries the post-translational modification N6-succinyllysine. Cys195 lines the [2Fe-2S] cluster pocket. His229 is an active-site residue. At Lys289 the chain carries N6-acetyllysine; alternate. At Lys289 the chain carries N6-succinyllysine; alternate. Asp382 is a catalytic residue. Positions 402, 405, and 410 each coordinate [2Fe-2S] cluster. Lys414 carries the N6-acetyllysine; alternate modification. The residue at position 414 (Lys414) is an N6-succinyllysine; alternate.

This sequence belongs to the ferrochelatase family. Homodimer. Homotetramer. Interaction with PGRMC1; the interaction results in decreased FECH activity. Interacts with ABCB10 and SLC25A37; this interaction forms an oligomeric complex. Forms a complex with ABCB7 and ABCB10, where a dimeric FECH bridges ABCB7 and ABCB10 homodimers; this complex may be required for cellular iron homeostasis, mitochondrial function and heme biosynthesis. Interacts with ABCB7 and ABCB10. [2Fe-2S] cluster is required as a cofactor. As to expression, erythroid and hepatic cells.

It localises to the mitochondrion inner membrane. The catalysed reaction is heme b + 2 H(+) = protoporphyrin IX + Fe(2+). Its pathway is porphyrin-containing compound metabolism; protoheme biosynthesis; protoheme from protoporphyrin-IX: step 1/1. Functionally, catalyzes the ferrous insertion into protoporphyrin IX. The sequence is that of Ferrochelatase, mitochondrial from Mus musculus (Mouse).